A 410-amino-acid chain; its full sequence is Multifunctional CCA protein (410 aa).

2 residues coordinate ATP: Gly8 and Arg11. Positions 8 and 11 each coordinate CTP. 2 residues coordinate Mg(2+): Asp21 and Asp23. ATP is bound by residues Arg91, Arg138, and Arg141. CTP-binding residues include Arg91, Arg138, and Arg141. One can recognise an HD domain in the interval 229–347 (TGIHQEMVSD…AQLALVCEAD (119 aa)).

Belongs to the tRNA nucleotidyltransferase/poly(A) polymerase family. Bacterial CCA-adding enzyme type 1 subfamily. Monomer. Can also form homodimers and oligomers. Mg(2+) serves as cofactor. The cofactor is Ni(2+).

The enzyme catalyses a tRNA precursor + 2 CTP + ATP = a tRNA with a 3' CCA end + 3 diphosphate. It catalyses the reaction a tRNA with a 3' CCA end + 2 CTP + ATP = a tRNA with a 3' CCACCA end + 3 diphosphate. In terms of biological role, catalyzes the addition and repair of the essential 3'-terminal CCA sequence in tRNAs without using a nucleic acid template. Adds these three nucleotides in the order of C, C, and A to the tRNA nucleotide-73, using CTP and ATP as substrates and producing inorganic pyrophosphate. tRNA 3'-terminal CCA addition is required both for tRNA processing and repair. Also involved in tRNA surveillance by mediating tandem CCA addition to generate a CCACCA at the 3' terminus of unstable tRNAs. While stable tRNAs receive only 3'-terminal CCA, unstable tRNAs are marked with CCACCA and rapidly degraded. In Xanthomonas axonopodis pv. citri (strain 306), this protein is Multifunctional CCA protein.